Here is a 641-residue protein sequence, read N- to C-terminus: Bifunctional protein glk (641 aa).

The interval 1–340 is glucokinase; sequence MSTGAQTKAA…QLSNRTGGAS (340 aa). 23 to 28 is an ATP binding site; it reads ADVGGT. The region spanning 341-417 is the HTH rpiR-type domain; that stretch reads SAVFERIRQM…LKLATGLTGT (77 aa). The putative HTH-type transcriptional regulator stretch occupies residues 341 to 641; the sequence is SAVFERIRQM…SHGAAPAAKD (301 aa). The H-T-H motif DNA-binding region spans 377–396; that stretch reads IVDIARKADVSQPTVIRFCR. In terms of domain architecture, SIS spans 461–600; the sequence is AIDILNNARR…AVGVAIRRAA (140 aa). A helical membrane pass occupies residues 576–596; sequence SMISRILHLVMIDILAVGVAI.

This sequence in the N-terminal section; belongs to the bacterial glucokinase family.

It localises to the membrane. It carries out the reaction D-glucose + ATP = D-glucose 6-phosphate + ADP + H(+). The sequence is that of Bifunctional protein glk (glk) from Burkholderia pseudomallei (strain 1710b).